Here is a 403-residue protein sequence, read N- to C-terminus: Dynactin subunit 2-B (403 aa).

Residues Met-1–Pro-26 form a disordered region. A coiled-coil region spans residues Pro-99–Lys-132. The segment at Ala-183–Leu-206 is disordered. Residues Ala-184 to Ser-194 show a composition bias toward basic and acidic residues. Residues Lys-381–Leu-401 are a coiled coil.

The protein belongs to the dynactin subunit 2 family. As to quaternary structure, subunit of dynactin, a multiprotein complex part of a tripartite complex with dynein and a adapter, such as BICDL1, BICD2 or HOOK3. The dynactin complex is built around ACTR1A/ACTB filament and consists of an actin-related filament composed of a shoulder domain, a pointed end and a barbed end. Its length is defined by its flexible shoulder domain. The soulder is composed of 2 DCTN1 subunits, 4 DCTN2 and 2 DCTN3.

It is found in the cytoplasm. Its subcellular location is the cytoskeleton. The protein localises to the microtubule organizing center. It localises to the centrosome. The protein resides in the membrane. Its function is as follows. Part of the dynactin complex that activates the molecular motor dynein for ultra-processive transport along microtubules. In the dynactin soulder domain, binds the ACTR1A filament and acts as a molecular ruler to determine the length. Modulates cytoplasmic dynein binding to an organelle, and plays a role in prometaphase chromosome alignment and spindle organization during mitosis. Involved in anchoring microtubules to centrosomes. This Xenopus laevis (African clawed frog) protein is Dynactin subunit 2-B (dctn2-b).